A 76-amino-acid polypeptide reads, in one-letter code: Spermatid nuclear transition protein 3 (76 aa).

Over residues 1–11 (AKVTEKSWQPQ) the composition is skewed to polar residues. Disordered stretches follow at residues 1–34 (AKVTEKSWQPQTTSTKRWKKRKTPSQPRSRGKVR) and 56–76 (VITTSRRQKRARRANKFETIP). The segment covering 16–34 (KRWKKRKTPSQPRSRGKVR) has biased composition (basic residues).

It is found in the nucleus. The protein localises to the chromosome. Involved in nuclear basic protein transition: histones are replaced by spermatid specific proteins which are themselves replaced by protamines in late spermatids. This Sus scrofa (Pig) protein is Spermatid nuclear transition protein 3 (TNP3).